The chain runs to 178 residues: Adenine phosphoribosyltransferase (178 aa).

Belongs to the purine/pyrimidine phosphoribosyltransferase family. As to quaternary structure, homodimer.

The protein localises to the cytoplasm. It catalyses the reaction AMP + diphosphate = 5-phospho-alpha-D-ribose 1-diphosphate + adenine. The protein operates within purine metabolism; AMP biosynthesis via salvage pathway; AMP from adenine: step 1/1. Catalyzes a salvage reaction resulting in the formation of AMP, that is energically less costly than de novo synthesis. The sequence is that of Adenine phosphoribosyltransferase from Bacteroides fragilis (strain ATCC 25285 / DSM 2151 / CCUG 4856 / JCM 11019 / LMG 10263 / NCTC 9343 / Onslow / VPI 2553 / EN-2).